A 412-amino-acid chain; its full sequence is Peptide chain release factor subunit 1 (412 aa).

It belongs to the eukaryotic release factor 1 family. As to quaternary structure, heterodimer of two subunits, one of which binds GTP.

It is found in the cytoplasm. Functionally, directs the termination of nascent peptide synthesis (translation) in response to the termination codons UAA, UAG and UGA. This chain is Peptide chain release factor subunit 1, found in Methanobrevibacter smithii (strain ATCC 35061 / DSM 861 / OCM 144 / PS).